A 447-amino-acid chain; its full sequence is MRPSTSVRTICANCSNHTRLFSTTVRSRSQQKSDATPASPPQAGYARLTNRGLISITGVDSTTFLQGLITQNMLITNDQNRATRQTGSYTAFLNSQGRVLNDAFLYPLPQADLTSPDEPAWLIEVDRNEVASLMKHLKKHKLRAKLKLRALEDGERTVWASWKDHEQPRWAAYNLESPSSSPFSPSSSIAGCIDTRAPGFGSRIITPGAEDLRTHVPDETQIAGSEVSLGAYTVRRMLHGIAEGQSEIIRESALPLECNMDMMKGIDFRKGCYVGQELTIRTHHTGVVRKRILPVQLYTGDQDALESAGAPVYDPTAELPLPPSAANMYKISARRARSTGKFLGGVGNIGLALCRLEMMTDVTLTGERTQYSPEQEFKVSWDAAEEGSSEHQEPGEVKVKAFVPSWTRDFILNGGVKKNTRGREAEGHRAREFLEQLEEEESLRQKE.

Residues 1-28 constitute a mitochondrion transit peptide; that stretch reads MRPSTSVRTICANCSNHTRLFSTTVRSR. Residues 24-36 are compositionally biased toward polar residues; sequence TVRSRSQQKSDAT. Disordered stretches follow at residues 24–44 and 417–447; these read TVRS…PQAG and KKNT…RQKE. Residues 421–434 are compositionally biased toward basic and acidic residues; it reads RGREAEGHRAREFL.

This sequence belongs to the GcvT family. CAF17/IBA57 subfamily.

The protein resides in the mitochondrion matrix. The polypeptide is Iron-sulfur cluster assembly factor IBA57 homolog, mitochondrial (caf17) (Aspergillus oryzae (strain ATCC 42149 / RIB 40) (Yellow koji mold)).